The chain runs to 106 residues: Guanyl-specific ribonuclease Th1 (106 aa).

2 cysteine pairs are disulfide-bonded: Cys5–Cys103 and Cys23–Cys84. His39 is an active-site residue. Glu58 functions as the Proton acceptor in the catalytic mechanism. His92 acts as the Proton donor in catalysis.

The protein belongs to the ribonuclease N1/T1 family.

It catalyses the reaction [RNA] containing guanosine + H2O = an [RNA fragment]-3'-guanosine-3'-phosphate + a 5'-hydroxy-ribonucleotide-3'-[RNA fragment].. This chain is Guanyl-specific ribonuclease Th1, found in Trichoderma harzianum (Hypocrea lixii).